Reading from the N-terminus, the 360-residue chain is MSWQNNLRSVSPYIAGEQPELTDIIKLNTNENPYPPTSVAQLFNERYKTKNLRLYPSTDAKSLRKKLADYHHLEVEQVIIGNGSDEVLSLSFLTFFNSQSPLLMPDITYSFYPIYCELYRIPFQKVPVDDDFKVLIKDYCIENGGIVIANPDAPTALALNLKDIEEILKKNQNSIVLINEAYIDFGGETCLPLLKKYDNLVVVQTFSKSRSLAGIRLGVAYGSAEAISHLYDVKNSFNSYPIDSLAQIIGEASLMDEHYFQKNIQKIIKTREVFKDNLVNLGFEVTDSKANFVFVHHPKVKAEELFKALYEAKIIVRHWNQPRIDDWLRITIGTNKEMNKVIEFLKGYLKKNEEIDEWKK.

Lysine 208 is subject to N6-(pyridoxal phosphate)lysine.

The protein belongs to the class-II pyridoxal-phosphate-dependent aminotransferase family. Histidinol-phosphate aminotransferase subfamily. Homodimer. The cofactor is pyridoxal 5'-phosphate.

It catalyses the reaction L-histidinol phosphate + 2-oxoglutarate = 3-(imidazol-4-yl)-2-oxopropyl phosphate + L-glutamate. Its pathway is amino-acid biosynthesis; L-histidine biosynthesis; L-histidine from 5-phospho-alpha-D-ribose 1-diphosphate: step 7/9. The polypeptide is Histidinol-phosphate aminotransferase (hisC) (Lactococcus lactis subsp. lactis (strain IL1403) (Streptococcus lactis)).